A 163-amino-acid chain; its full sequence is Cyclic pyranopterin monophosphate synthase (163 aa).

Substrate-binding positions include 74 to 76 and 111 to 112; these read MCH and ME. D126 is an active-site residue.

This sequence belongs to the MoaC family. Homohexamer; trimer of dimers.

It catalyses the reaction (8S)-3',8-cyclo-7,8-dihydroguanosine 5'-triphosphate = cyclic pyranopterin phosphate + diphosphate. Its pathway is cofactor biosynthesis; molybdopterin biosynthesis. In terms of biological role, catalyzes the conversion of (8S)-3',8-cyclo-7,8-dihydroguanosine 5'-triphosphate to cyclic pyranopterin monophosphate (cPMP). This chain is Cyclic pyranopterin monophosphate synthase, found in Desulfitobacterium hafniense (strain DSM 10664 / DCB-2).